The chain runs to 274 residues: F-box protein SKIP5 (274 aa).

An F-box domain is found at 32 to 79; it reads LTSLNNLDDGCLMHILSFLSPIPDRYNTALVCHRWRYLACHPRLWLRV.

As to quaternary structure, part of a SCF (SKP1-cullin-F-box) protein ligase complex. Interacts with SKP1A/ASK1.

It functions in the pathway protein modification; protein ubiquitination. This is F-box protein SKIP5 (SKIP5) from Arabidopsis thaliana (Mouse-ear cress).